The following is a 207-amino-acid chain: Ras-related protein Rab-2A (207 aa).

12 to 20 (GDTGVGKSC) contacts GTP. The Effector region motif lies at 34 to 42 (HDLTIGVEF). GTP is bound by residues 60–64 (DTAGQ), 118–121 (NKSD), and 148–150 (SAK). The segment at 187-207 (GAPTSKQDGTDQKPAGGGCCK) is disordered. 2 S-geranylgeranyl cysteine lipidation sites follow: C205 and C206.

This sequence belongs to the small GTPase superfamily. Rab family.

It localises to the cell membrane. It carries out the reaction GTP + H2O = GDP + phosphate + H(+). With respect to regulation, regulated by guanine nucleotide exchange factors (GEFs) which promote the exchange of bound GDP for free GTP, GTPase activating proteins (GAPs) which increase the GTP hydrolysis activity, and GDP dissociation inhibitors which inhibit the dissociation of the nucleotide from the GTPase. In terms of biological role, the small GTPases Rab are key regulators of intracellular membrane trafficking, from the formation of transport vesicles to their fusion with membranes. Rabs cycle between active GTP-bound and inactive GDP-bound states. In their active state, drive transport of vesicular carriers from donor organelles to acceptor organelles to regulate the membrane traffic that maintains organelle identity and morphology. This is Ras-related protein Rab-2A (rab2A) from Dictyostelium discoideum (Social amoeba).